Consider the following 183-residue polypeptide: Ribosome-recycling factor (183 aa).

The protein belongs to the RRF family.

Its subcellular location is the cytoplasm. Functionally, responsible for the release of ribosomes from messenger RNA at the termination of protein biosynthesis. May increase the efficiency of translation by recycling ribosomes from one round of translation to another. The chain is Ribosome-recycling factor from Treponema pallidum (strain Nichols).